We begin with the raw amino-acid sequence, 326 residues long: Flotillin-like protein FloA (326 aa).

Transmembrane regions (helical) follow at residues Ile6–Val26 and Ser27–Met47.

The protein belongs to the flotillin-like FloA family. Homooligomerizes.

It localises to the cell membrane. It is found in the membrane raft. Its function is as follows. Found in functional membrane microdomains (FMM) that may be equivalent to eukaryotic membrane rafts. FMMs are highly dynamic and increase in number as cells age. Flotillins are thought to be important factors in membrane fluidity. The chain is Flotillin-like protein FloA from Desulfosudis oleivorans (strain DSM 6200 / JCM 39069 / Hxd3) (Desulfococcus oleovorans).